The following is a 427-amino-acid chain: Pseudouridylate synthase 1 homolog (427 aa).

Positions 20-83 (GPRPSCSPRM…DEERREKPPK (64 aa)) are disordered. Over residues 44–79 (QDRRSCSGRAGGDRVWEDGEHPAKKLKSGGDEERRE) the composition is skewed to basic and acidic residues. Aspartate 146 acts as the Nucleophile in catalysis. Positions 407-427 (GGTGAKVPSPLEGSEGDGDTD) are disordered. A phosphoserine mark is found at serine 415 and serine 420. The residue at position 426 (threonine 426) is a Phosphothreonine.

This sequence belongs to the tRNA pseudouridine synthase TruA family. Monomer. Forms a complex with RARG and the SRA1 RNA in the nucleus. Widely expressed. High levels of expression found in brain and skeletal muscle.

It localises to the mitochondrion. The protein localises to the nucleus. The protein resides in the cytoplasm. The catalysed reaction is a uridine in tRNA = a pseudouridine in tRNA. It catalyses the reaction uridine(38/39/40) in tRNA = pseudouridine(38/39/40) in tRNA. The enzyme catalyses a uridine in mRNA = a pseudouridine in mRNA. Its function is as follows. Pseudouridylate synthase that catalyzes pseudouridylation of tRNAs and mRNAs. Acts on positions 27/28 in the anticodon stem and also positions 34 and 36 in the anticodon of an intron containing tRNA. Also catalyzes pseudouridylation of mRNAs: mediates pseudouridylation of mRNAs with the consensus sequence 5'-UGUAG-3'. Acts as a regulator of pre-mRNA splicing by mediating pseudouridylation of pre-mRNAs at locations associated with alternatively spliced regions. Pseudouridylation of pre-mRNAs near splice sites directly regulates mRNA splicing and mRNA 3'-end processing. Involved in regulation of nuclear receptor activity through pseudouridylation of SRA1 mRNA. The sequence is that of Pseudouridylate synthase 1 homolog from Homo sapiens (Human).